We begin with the raw amino-acid sequence, 101 residues long: CYC02 protein (101 aa).

A 1; approximate repeat occupies 42-64; sequence DAVCHHGCCRWFHHRCVRCCRSA. Positions 42–101 are 2 X approximate repeats; it reads DAVCHHGCCRWFHHRCVRCCRSAEEVSVSDTENNAAADAHCRHGCCRWFHGRCIRCCPSA. One copy of the 2; approximate repeat lies at 79–101; it reads DAHCRHGCCRWFHGRCIRCCPSA.

The protein belongs to the GRP family.

In terms of biological role, may be involved in the control of the cell cycle at the G1/S start transition. This chain is CYC02 protein (CYC02), found in Catharanthus roseus (Madagascar periwinkle).